Consider the following 1072-residue polypeptide: Carbamoyl phosphate synthase large chain (1072 aa).

The segment at 1–401 is carboxyphosphate synthetic domain; sequence MPKRLDINTI…SLLKAVRSLE (401 aa). Arg-129, Arg-169, Gly-175, Gly-176, Lys-208, Ile-210, Glu-215, Gly-241, Val-242, His-243, Gln-284, and Glu-298 together coordinate ATP. The ATP-grasp 1 domain occupies 133 to 327; sequence RTLMQELNEP…IAKLAAKIAV (195 aa). Gln-284, Glu-298, and Asn-300 together coordinate Mg(2+). Residues Gln-284, Glu-298, and Asn-300 each coordinate Mn(2+). Residues 402–546 form an oligomerization domain region; sequence LGIYHLELNH…YSTYGDENES (145 aa). The carbamoyl phosphate synthetic domain stretch occupies residues 547 to 929; that stretch reads IVTERKSVMV…ALYKGLVAAG (383 aa). Positions 671–861 constitute an ATP-grasp 2 domain; that stretch reads EAALTELGIP…MANIATKVIL (191 aa). The ATP site is built by Arg-707, Arg-746, Glu-752, Gly-777, Val-778, His-779, Ser-780, Gln-820, and Glu-832. Mg(2+) contacts are provided by Gln-820, Glu-832, and Asn-834. Mn(2+) is bound by residues Gln-820, Glu-832, and Asn-834. The MGS-like domain occupies 930–1072; the sequence is ISIPTHGSVI…PTTRHEVVHA (143 aa). Residues 930 to 1072 are allosteric domain; the sequence is ISIPTHGSVI…PTTRHEVVHA (143 aa).

Belongs to the CarB family. In terms of assembly, composed of two chains; the small (or glutamine) chain promotes the hydrolysis of glutamine to ammonia, which is used by the large (or ammonia) chain to synthesize carbamoyl phosphate. Tetramer of heterodimers (alpha,beta)4. The cofactor is Mg(2+). Requires Mn(2+) as cofactor.

It catalyses the reaction hydrogencarbonate + L-glutamine + 2 ATP + H2O = carbamoyl phosphate + L-glutamate + 2 ADP + phosphate + 2 H(+). It carries out the reaction hydrogencarbonate + NH4(+) + 2 ATP = carbamoyl phosphate + 2 ADP + phosphate + 2 H(+). The protein operates within amino-acid biosynthesis; L-arginine biosynthesis; carbamoyl phosphate from bicarbonate: step 1/1. Its pathway is pyrimidine metabolism; UMP biosynthesis via de novo pathway; (S)-dihydroorotate from bicarbonate: step 1/3. Large subunit of the glutamine-dependent carbamoyl phosphate synthetase (CPSase). CPSase catalyzes the formation of carbamoyl phosphate from the ammonia moiety of glutamine, carbonate, and phosphate donated by ATP, constituting the first step of 2 biosynthetic pathways, one leading to arginine and/or urea and the other to pyrimidine nucleotides. The large subunit (synthetase) binds the substrates ammonia (free or transferred from glutamine from the small subunit), hydrogencarbonate and ATP and carries out an ATP-coupled ligase reaction, activating hydrogencarbonate by forming carboxy phosphate which reacts with ammonia to form carbamoyl phosphate. The sequence is that of Carbamoyl phosphate synthase large chain from Bacillus cytotoxicus (strain DSM 22905 / CIP 110041 / 391-98 / NVH 391-98).